Reading from the N-terminus, the 326-residue chain is MTESVKKIAVTGAAGQIAYSLLWRIANGDVYGKNTPVELQLLEIPQAIGGAEGVAMELLDSAFPLLKNIVVTDKAEVAFDGTNAAFLVGAKPRGKGEERADLLTANGKIFGPQGKALNDNAADDIRVLVVGNPANTNALIAQHAAKDIPADRFNAMMRLDHNRGIAQLSEKLGRDKNDIEKFVVWGNHSAGQFPDITYATIGGEAISGLVDHDWYTGEFIPRVAKRGAEIIEVRGKSSAASAASSAIDHMHDWINGTDGQWRTAAIPSDGSYGVPEGLIFGFPTISEDGQWKIVQDLELSDFQKDGIARNVTELEEEREAVKDLLG.

12 to 18 (GAAGQIA) is an NAD(+) binding site. Substrate is bound by residues Arg93 and Arg99. NAD(+)-binding positions include Asn106, Gln113, and 130-132 (VGN). Asn132 and Arg163 together coordinate substrate. The active-site Proton acceptor is the His188.

Belongs to the LDH/MDH superfamily. MDH type 2 family.

The catalysed reaction is (S)-malate + NAD(+) = oxaloacetate + NADH + H(+). Its function is as follows. Catalyzes the reversible oxidation of malate to oxaloacetate. The protein is Malate dehydrogenase of Corynebacterium diphtheriae (strain ATCC 700971 / NCTC 13129 / Biotype gravis).